Here is a 426-residue protein sequence, read N- to C-terminus: GTPase HflX (426 aa).

Residues 198–365 enclose the Hflx-type G domain; the sequence is PTVSLVGYTN…ALTERLSGEV (168 aa). GTP-binding positions include 204–211, 229–233, 251–254, 317–320, and 343–345; these read GYTNAGKS, FATLD, DTVG, NKID, and SAQ. Positions 211 and 231 each coordinate Mg(2+).

This sequence belongs to the TRAFAC class OBG-HflX-like GTPase superfamily. HflX GTPase family. As to quaternary structure, monomer. Associates with the 50S ribosomal subunit. This interaction occurs in the presence of GTP, GDP, ATP or ADP, but not in their absence. Mg(2+) serves as cofactor.

The protein resides in the cytoplasm. Its activity is regulated as follows. Intrinsic GTPase activity is very slow and can be stimulated by the presence of 50S ribosomal subunits or 70S ribosomes. GTPase activity is inhibited by ATP. Functionally, GTPase that associates with the 50S ribosomal subunit and may have a role during protein synthesis or ribosome biogenesis. In vitro, also exhibits ATPase activity. This is GTPase HflX from Escherichia coli (strain K12).